A 379-amino-acid chain; its full sequence is Polycomb group protein FIE2 (379 aa).

6 WD repeats span residues 85 to 128, 131 to 171, 177 to 217, 243 to 280, 292 to 333, and 340 to 378; these read DKDE…LAKS, GHGD…CILI, GHRN…LYVD, VHSN…QSPG, VPEC…PVLI, and QCKS…PSSR.

Belongs to the WD repeat ESC family. Widely expressed. Expressed in the embryo sac before pollination. After pollination, its expression persists, predominantly in the embryo and at lower levels in the endosperm.

The protein resides in the nucleus. Polycomb group (PcG) protein. PcG proteins act by forming multiprotein complexes, which are required to maintain the transcriptionally repressive state of homeotic genes throughout development. PcG proteins are not required to initiate repression, but to maintain it during later stages of development. They probably act via the methylation of histones, rendering chromatin heritably changed in its expressibility. In Zea mays (Maize), this protein is Polycomb group protein FIE2 (FIE2).